A 341-amino-acid chain; its full sequence is Glyceraldehyde-3-phosphate dehydrogenase, cytosolic (341 aa).

NAD(+)-binding positions include 14–15 (RI) and D36. Residues 153-155 (SCT), T184, 213-214 (TG), and R236 each bind D-glyceraldehyde 3-phosphate. The Nucleophile role is filled by C154. N318 serves as a coordination point for NAD(+).

It belongs to the glyceraldehyde-3-phosphate dehydrogenase family. In terms of assembly, homotetramer.

The protein localises to the cytoplasm. It catalyses the reaction D-glyceraldehyde 3-phosphate + phosphate + NAD(+) = (2R)-3-phospho-glyceroyl phosphate + NADH + H(+). It functions in the pathway carbohydrate degradation; glycolysis; pyruvate from D-glyceraldehyde 3-phosphate: step 1/5. Key enzyme in glycolysis that catalyzes the first step of the pathway by converting D-glyceraldehyde 3-phosphate (G3P) into 3-phospho-D-glyceroyl phosphate. Essential for the maintenance of cellular ATP levels and carbohydrate metabolism. The sequence is that of Glyceraldehyde-3-phosphate dehydrogenase, cytosolic (GAPC) from Chlamydomonas reinhardtii (Chlamydomonas smithii).